The following is a 189-amino-acid chain: MSTVKEAAHRLSKSEMSLYAVLDLKKGASPEDFKKSYSHSALLPHPPFEYHLGRKLALRYHPDKNPGNAQAAEIFKEINAAHAILSDSKKRKIYDQHGSLGIYLYDHFGEEGVRYYFILNSCWFKTLVILCTLLTCCCFCCCCCFCCGALKPPPEQDSGRKYQQNVQSQPPRSGAKCDFRSEENSEDDF.

A J domain is found at 17-98 (SLYAVLDLKK…KKRKIYDQHG (82 aa)). Residues 154–189 (PEQDSGRKYQQNVQSQPPRSGAKCDFRSEENSEDDF) are disordered. Over residues 161–171 (KYQQNVQSQPP) the composition is skewed to polar residues.

Palmitoylated. As to expression, testis specific.

Its subcellular location is the membrane. This is DnaJ homolog subfamily C member 5G (DNAJC5G) from Homo sapiens (Human).